Consider the following 424-residue polypeptide: L-glutamine:2-deoxy-scyllo-inosose aminotransferase (424 aa).

The residue at position 202 (Lys-202) is an N6-(pyridoxal phosphate)lysine.

The protein belongs to the DegT/DnrJ/EryC1 family. L-glutamine:2-deoxy-scyllo-inosose/scyllo-inosose aminotransferase subfamily. Pyridoxal 5'-phosphate is required as a cofactor.

It catalyses the reaction 2-deoxy-L-scyllo-inosose + L-glutamine = 2-deoxy-scyllo-inosamine + 2-oxoglutaramate. The enzyme catalyses 3-amino-2,3-dideoxy-scyllo-inosose + L-glutamine = 2-deoxystreptamine + 2-oxoglutaramate. Its pathway is metabolic intermediate biosynthesis; 2-deoxystreptamine biosynthesis; 2-deoxystreptamine from D-glucose 6-phosphate: step 2/4. It functions in the pathway metabolic intermediate biosynthesis; 2-deoxystreptamine biosynthesis; 2-deoxystreptamine from D-glucose 6-phosphate: step 4/4. The protein operates within antibiotic biosynthesis; paromomycin biosynthesis. In terms of biological role, catalyzes the PLP-dependent transamination of 2-deoxy-scyllo-inosose (2-DOI) to form 2-deoxy-scyllo-inosamine (2-DOIA) using L-glutamine as the amino donor. Also catalyzes the transamination of 3-amino-2,3-dideoxy-scyllo-inosose (keto-2-DOIA) into 2-deoxystreptamine (2-DOS). In Streptomyces paromomycinus (Streptomyces rimosus subsp. paromomycinus), this protein is L-glutamine:2-deoxy-scyllo-inosose aminotransferase (parS).